Here is an 818-residue protein sequence, read N- to C-terminus: Myosin-A (818 aa).

Phosphoserine; by PKG is present on serine 19. The Myosin motor domain maps to 97–771 (MSFGDIGLLN…GAKILTKIQR (675 aa)). 191–198 (GESGAGKT) is a binding site for ATP. The segment at 661 to 671 (PHFIRCIKPNE) is actin-binding. The tract at residues 773–818 (KLVEWENCVSVIEAAILKHKYKQKVNKNIPSLLRVQAHIRKKMVAQ) is tail.

This sequence belongs to the TRAFAC class myosin-kinesin ATPase superfamily. Myosin family. Component of the glideosome complex composed of GAP50, GAP45, MTIP and MyoA; the complex is formed during the late schizont stage and in merozoites. MyoA, MTIP and GAP45 probably form an initial complex in the cytoplasm which is then recruited to the outer face of the inner membrane complex via the interaction with GAP50. Interacts with ACT1.

The protein resides in the cell membrane. In terms of biological role, myosins are actin-based motor molecules with ATPase activity. Unconventional myosins serve in intracellular movements. Their highly divergent tails are presumed to bind to membranous compartments, which would be moved relative to actin filaments. This Plasmodium falciparum (isolate 3D7) protein is Myosin-A.